Reading from the N-terminus, the 687-residue chain is Glycine--tRNA ligase beta subunit (687 aa).

This sequence belongs to the class-II aminoacyl-tRNA synthetase family. As to quaternary structure, tetramer of two alpha and two beta subunits.

Its subcellular location is the cytoplasm. The enzyme catalyses tRNA(Gly) + glycine + ATP = glycyl-tRNA(Gly) + AMP + diphosphate. This chain is Glycine--tRNA ligase beta subunit, found in Neisseria gonorrhoeae (strain ATCC 700825 / FA 1090).